Consider the following 684-residue polypeptide: Glycine--tRNA ligase beta subunit (684 aa).

It belongs to the class-II aminoacyl-tRNA synthetase family. Tetramer of two alpha and two beta subunits.

The protein localises to the cytoplasm. The enzyme catalyses tRNA(Gly) + glycine + ATP = glycyl-tRNA(Gly) + AMP + diphosphate. This is Glycine--tRNA ligase beta subunit from Pseudomonas aeruginosa (strain LESB58).